A 131-amino-acid chain; its full sequence is Small ribosomal subunit protein uS8 (131 aa).

It belongs to the universal ribosomal protein uS8 family. In terms of assembly, part of the 30S ribosomal subunit. Contacts proteins S5 and S12.

In terms of biological role, one of the primary rRNA binding proteins, it binds directly to 16S rRNA central domain where it helps coordinate assembly of the platform of the 30S subunit. The chain is Small ribosomal subunit protein uS8 from Nitrosomonas eutropha (strain DSM 101675 / C91 / Nm57).